We begin with the raw amino-acid sequence, 280 residues long: Thymidylate synthase (280 aa).

Arginine 21 is a dUMP binding site. Histidine 51 provides a ligand contact to (6R)-5,10-methylene-5,6,7,8-tetrahydrofolate. Residue 142–143 (RR) coordinates dUMP. Cysteine 162 acts as the Nucleophile in catalysis. Residues 182–185 (RSAD), asparagine 193, and 223–225 (HLY) contribute to the dUMP site. Aspartate 185 contacts (6R)-5,10-methylene-5,6,7,8-tetrahydrofolate. Residue alanine 279 coordinates (6R)-5,10-methylene-5,6,7,8-tetrahydrofolate.

This sequence belongs to the thymidylate synthase family. Bacterial-type ThyA subfamily. As to quaternary structure, homodimer.

Its subcellular location is the cytoplasm. The enzyme catalyses dUMP + (6R)-5,10-methylene-5,6,7,8-tetrahydrofolate = 7,8-dihydrofolate + dTMP. It participates in pyrimidine metabolism; dTTP biosynthesis. In terms of biological role, catalyzes the reductive methylation of 2'-deoxyuridine-5'-monophosphate (dUMP) to 2'-deoxythymidine-5'-monophosphate (dTMP) while utilizing 5,10-methylenetetrahydrofolate (mTHF) as the methyl donor and reductant in the reaction, yielding dihydrofolate (DHF) as a by-product. This enzymatic reaction provides an intracellular de novo source of dTMP, an essential precursor for DNA biosynthesis. In Acinetobacter baylyi (strain ATCC 33305 / BD413 / ADP1), this protein is Thymidylate synthase.